Consider the following 607-residue polypeptide: Acyl-coenzyme A thioesterase 11 (607 aa).

The N-terminal 13 residues, 1-13 (MIQNVGNHLRRGL), are a transit peptide targeting the mitochondrion. S15 and S25 each carry phosphoserine. Residues 43–155 (NPTEVQMSQL…LATFVARREI (113 aa)) form the HotDog ACOT-type 1 domain. CoA contacts are provided by residues 91–93 (TAS), 120–122 (NSS), R181, and 271–273 (HFR). The 114-residue stretch at 216–329 (EKTRVESVEL…FMTFVVLDAD (114 aa)) folds into the HotDog ACOT-type 2 domain. One can recognise an START domain in the interval 375–585 (LSVPWDPSNQ…GWNGKLAGGH (211 aa)).

Isoform 1 is predominantly expressed in skeletal muscle, liver, testis, stomach, spleen, lung and brain. Isoform 2 is predominantly expressed in kidney, uterus, hibernoma and white adipose tissue.

The protein resides in the mitochondrion matrix. It localises to the cytoplasm. It carries out the reaction hexadecanoyl-CoA + H2O = hexadecanoate + CoA + H(+). The enzyme catalyses tetradecanoyl-CoA + H2O = tetradecanoate + CoA + H(+). The catalysed reaction is dodecanoyl-CoA + H2O = dodecanoate + CoA + H(+). It catalyses the reaction butanoyl-CoA + H2O = butanoate + CoA + H(+). Its pathway is lipid metabolism; fatty acid metabolism. In terms of biological role, has an acyl-CoA thioesterase activity with a preference for the long chain fatty acyl-CoA thioesters hexadecanoyl-CoA/palmitoyl-CoA and tetradecanoyl-CoA/myristoyl-CoA which are the main substrates in the mitochondrial beta-oxidation pathway. This is Acyl-coenzyme A thioesterase 11 (ACOT11) from Homo sapiens (Human).